The primary structure comprises 447 residues: UDP-N-acetylmuramoylalanine--D-glutamate ligase (447 aa).

130 to 136 (GTSGKTT) is an ATP binding site.

This sequence belongs to the MurCDEF family.

It localises to the cytoplasm. The catalysed reaction is UDP-N-acetyl-alpha-D-muramoyl-L-alanine + D-glutamate + ATP = UDP-N-acetyl-alpha-D-muramoyl-L-alanyl-D-glutamate + ADP + phosphate + H(+). It functions in the pathway cell wall biogenesis; peptidoglycan biosynthesis. Cell wall formation. Catalyzes the addition of glutamate to the nucleotide precursor UDP-N-acetylmuramoyl-L-alanine (UMA). In Oleidesulfovibrio alaskensis (strain ATCC BAA-1058 / DSM 17464 / G20) (Desulfovibrio alaskensis), this protein is UDP-N-acetylmuramoylalanine--D-glutamate ligase.